A 244-amino-acid chain; its full sequence is MFRCLMQNHQRRALVLFSGGQDSTTCLAWALERYAHVETLGFDYGQRHRVELDARQVVLRELRANFPDWAQRLGDDHLLDLGILAQVGDTAMTSDREIEMQANGLPNTFVPGRNLLFLTLAAALGYRRQLDVLVGGMCETDFSGYPDCRDDTIKSQQVTLGLGLGTRVTIETPLMWLDKAQTWELADRLGGQALVDMVIEHSHTCYLGERGQRHDWGYGCGHCPACALRKNGWERWVAGAAHAD.

17–27 is a binding site for ATP; sequence FSGGQDSTTCL. Residues Cys205, Cys220, Cys223, and Cys226 each coordinate Zn(2+).

The protein belongs to the QueC family. Requires Zn(2+) as cofactor.

The enzyme catalyses 7-carboxy-7-deazaguanine + NH4(+) + ATP = 7-cyano-7-deazaguanine + ADP + phosphate + H2O + H(+). It participates in purine metabolism; 7-cyano-7-deazaguanine biosynthesis. Functionally, catalyzes the ATP-dependent conversion of 7-carboxy-7-deazaguanine (CDG) to 7-cyano-7-deazaguanine (preQ(0)). The protein is 7-cyano-7-deazaguanine synthase of Bordetella pertussis (strain Tohama I / ATCC BAA-589 / NCTC 13251).